Here is a 315-residue protein sequence, read N- to C-terminus: Tyrosine recombinase XerC (315 aa).

Residues 14 to 105 (PDLLNERQSW…GLRSLLHHLQ (92 aa)) enclose the Core-binding (CB) domain. Positions 126 to 309 (SLPKPLTDRQ…DTARLLEIYD (184 aa)) constitute a Tyr recombinase domain. Active-site residues include Arg169, Lys193, His261, Arg264, and His287. Tyr296 serves as the catalytic O-(3'-phospho-DNA)-tyrosine intermediate.

The protein belongs to the 'phage' integrase family. XerC subfamily. As to quaternary structure, forms a cyclic heterotetrameric complex composed of two molecules of XerC and two molecules of XerD.

It localises to the cytoplasm. Functionally, site-specific tyrosine recombinase, which acts by catalyzing the cutting and rejoining of the recombining DNA molecules. The XerC-XerD complex is essential to convert dimers of the bacterial chromosome into monomers to permit their segregation at cell division. It also contributes to the segregational stability of plasmids. The sequence is that of Tyrosine recombinase XerC from Agrobacterium fabrum (strain C58 / ATCC 33970) (Agrobacterium tumefaciens (strain C58)).